A 297-amino-acid chain; its full sequence is uncharacterized protein (297 aa).

5 consecutive transmembrane segments (helical) span residues 114–136 (YNRW…LSSG), 150–170 (LLYD…VFNV), 197–217 (MPIV…GVHL), 227–247 (AFTV…KAMI), and 269–289 (FINT…PGLL).

The protein belongs to the ThrE exporter (TC 2.A.79) family.

It is found in the cell inner membrane. This is an uncharacterized protein from Haemophilus influenzae (strain ATCC 51907 / DSM 11121 / KW20 / Rd).